We begin with the raw amino-acid sequence, 393 residues long: UPF0496 protein At2g18630 (393 aa).

Residues 1 to 20 (MMGGKSSKSKKNVEFGSPST) form a disordered region. Positions 149-222 (VNQFEEENED…RLRNIKTWRR (74 aa)) form a coiled coil. 2 helical membrane passes run 226 to 246 (MVFV…AAVA) and 249 to 269 (PVVA…GKWC). A coiled-coil region spans residues 299-356 (KEMDNISILVRKVEVEIESLLKKAEFAITEEKEVRLAIDEIKKKLDVFTETIEELGEH).

This sequence belongs to the UPF0496 family.

The protein resides in the membrane. In Arabidopsis thaliana (Mouse-ear cress), this protein is UPF0496 protein At2g18630.